Here is a 76-residue protein sequence, read N- to C-terminus: Sec-independent protein translocase protein TatA (76 aa).

A helical transmembrane segment spans residues Met-1–Gly-21. Residues Met-43 to Ala-76 form a disordered region. Residues Asn-64 to Ala-76 are compositionally biased toward basic and acidic residues.

It belongs to the TatA/E family. The Tat system comprises two distinct complexes: a TatABC complex, containing multiple copies of TatA, TatB and TatC subunits, and a separate TatA complex, containing only TatA subunits. Substrates initially bind to the TatABC complex, which probably triggers association of the separate TatA complex to form the active translocon.

The protein localises to the cell inner membrane. Functionally, part of the twin-arginine translocation (Tat) system that transports large folded proteins containing a characteristic twin-arginine motif in their signal peptide across membranes. TatA could form the protein-conducting channel of the Tat system. This chain is Sec-independent protein translocase protein TatA, found in Burkholderia multivorans (strain ATCC 17616 / 249).